Consider the following 2193-residue polypeptide: Genome polyprotein (2193 aa).

The tract at residues 1–22 is disordered; sequence MGSQVSTQRSGSHENSNSASEG. G2 carries the N-myristoyl glycine; by host lipid modification. The Cytoplasmic segment spans residues 2–1503; sequence GSQVSTQRSG…HLNRAVLIMQ (1502 aa). Amphipathic alpha-helix regions lie at residues 566–588 and 568–588; these read GDGI…LTSL and GIAD…LTSL. Catalysis depends on for protease 2A activity residues H883 and D901. Residues C918 and C920 each contribute to the Zn(2+) site. C972 (for protease 2A activity) is an active-site residue. The Zn(2+) site is built by C978 and H980. Residues 1112–1184 are membrane-binding; the sequence is SASWLKKFND…EQSAASQEDL (73 aa). The oligomerization stretch occupies residues 1112-1250; the sequence is SASWLKKFND…SPGTGKSLAT (139 aa). Residues 1133-1137 form an RNA-binding region; sequence SNKIS. The region spanning 1216 to 1374 is the SF3 helicase domain; sequence EKRMNNYMQF…YKTDLGRLDA (159 aa). Residue 1240–1247 participates in ATP binding; the sequence is GSPGTGKS. The Zn(2+) site is built by C1381, C1392, and C1397. The segment at 1381–1397 adopts a C4-type; degenerate zinc-finger fold; it reads CSENNTANFKRCSPLVC. The segment at 1424-1431 is RNA-binding; it reads EYNNRYAI. Positions 1435–1440 are oligomerization; the sequence is IEALFQ. Residues 1504-1519 lie within the membrane without spanning it; the sequence is SIATVVAVVSLVYVIY. At 1520–2193 the chain is on the cytoplasmic side; the sequence is KLFAGFQGAY…NLRRNWLELF (674 aa). O-(5'-phospho-RNA)-tyrosine is present on Y1529. The Peptidase C3 domain maps to 1549 to 1727; sequence GPSLDFALSL…FCAGLKRSYF (179 aa). Active-site for protease 3C activity residues include H1588, E1619, and C1695. Positions 1958–2073 constitute a RdRp catalytic domain; sequence GSLFAFDYSG…ASYPFPIDCL (116 aa). Positions 1964 and 2060 each coordinate Mg(2+).

Belongs to the picornaviruses polyprotein family. As to quaternary structure, interacts with capsid protein VP1 and capsid protein VP3 to form heterotrimeric protomers. Interacts with capsid protein VP0, and capsid protein VP3 to form heterotrimeric protomers. Five protomers subsequently associate to form pentamers which serve as building blocks for the capsid. Interacts with capsid protein VP2, capsid protein VP3 and capsid protein VP4 following cleavage of capsid protein VP0. In terms of assembly, interacts with capsid protein VP1 and capsid protein VP3 in the mature capsid. As to quaternary structure, interacts with capsid protein VP0 and capsid protein VP1 to form heterotrimeric protomers. Five protomers subsequently associate to form pentamers which serve as building blocks for the capsid. Interacts with capsid protein VP4 in the mature capsid. Interacts with protein 2C; this interaction may be important for virion morphogenesis. Interacts with capsid protein VP1 and capsid protein VP3. In terms of assembly, homodimer. As to quaternary structure, homohexamer; forms a hexameric ring structure with 6-fold symmetry characteristic of AAA+ ATPases. Interacts (via N-terminus) with host RTN3 (via reticulon domain); this interaction is important for viral replication. Interacts with capsid protein VP3; this interaction may be important for virion morphogenesis. Interacts with protein 3CD. In terms of assembly, homodimer. Interacts with host GBF1. Interacts (via GOLD domain) with host ACBD3 (via GOLD domain); this interaction allows the formation of a viral protein 3A/ACBD3 heterotetramer with a 2:2 stoichiometry, which will stimulate the recruitment of host PI4KB in order to synthesize PI4P at the viral RNA replication sites. As to quaternary structure, interacts with RNA-directed RNA polymerase. Interacts with host IFIH1/MDA5; this interaction inhibits host IFIH1. In terms of assembly, interacts with protein 3AB and with RNA-directed RNA polymerase. As to quaternary structure, interacts with Viral protein genome-linked and with protein 3CD. Mg(2+) serves as cofactor. Post-translationally, specific enzymatic cleavages in vivo by the viral proteases yield processing intermediates and the mature proteins. In terms of processing, myristoylation is required for the formation of pentamers during virus assembly. Further assembly of 12 pentamers and a molecule of genomic RNA generates the provirion. During virion maturation, immature virions are rendered infectious following cleavage of VP0 into VP4 and VP2. This maturation seems to be an autocatalytic event triggered by the presence of RNA in the capsid and it is followed by a conformational change infectious virion. Post-translationally, myristoylation is required during RNA encapsidation and formation of the mature virus particle. In terms of processing, VPg is uridylylated by the polymerase into VPg-pUpU. This acts as a nucleotide-peptide primer for the genomic RNA replication.

It is found in the virion. It localises to the host cytoplasm. The protein localises to the host cytoplasmic vesicle membrane. The protein resides in the host nucleus. It carries out the reaction a ribonucleoside 5'-triphosphate + H2O = a ribonucleoside 5'-diphosphate + phosphate + H(+). The enzyme catalyses Selective cleavage of Tyr-|-Gly bond in the picornavirus polyprotein.. It catalyses the reaction RNA(n) + a ribonucleoside 5'-triphosphate = RNA(n+1) + diphosphate. The catalysed reaction is Selective cleavage of Gln-|-Gly bond in the poliovirus polyprotein. In other picornavirus reactions Glu may be substituted for Gln, and Ser or Thr for Gly.. Its activity is regulated as follows. Replication or transcription is subject to high level of random mutations by the nucleotide analog ribavirin. Functionally, forms an icosahedral capsid of pseudo T=3 symmetry with capsid proteins VP2 and VP3. The capsid is 300 Angstroms in diameter, composed of 60 copies of each capsid protein and enclosing the viral positive strand RNA genome. Capsid protein VP1 mainly forms the vertices of the capsid. Capsid protein VP1 interacts with host cell receptor to provide virion attachment to target host cells. This attachment induces virion internalization. After binding to its receptor, the capsid undergoes conformational changes. Capsid protein VP1 N-terminus (that contains an amphipathic alpha-helix) and capsid protein VP4 are externalized. Together, they shape a pore in the host membrane through which viral genome is translocated to host cell cytoplasm. In terms of biological role, forms an icosahedral capsid of pseudo T=3 symmetry with capsid proteins VP2 and VP3. The capsid is 300 Angstroms in diameter, composed of 60 copies of each capsid protein and enclosing the viral positive strand RNA genome. Its function is as follows. Lies on the inner surface of the capsid shell. After binding to the host receptor, the capsid undergoes conformational changes. Capsid protein VP4 is released, Capsid protein VP1 N-terminus is externalized, and together, they shape a pore in the host membrane through which the viral genome is translocated into the host cell cytoplasm. Component of immature procapsids, which is cleaved into capsid proteins VP4 and VP2 after maturation. Allows the capsid to remain inactive before the maturation step. Functionally, cysteine protease that cleaves viral polyprotein and specific host proteins. It is responsible for the autocatalytic cleavage between the P1 and P2 regions, which is the first cleavage occurring in the polyprotein. Also cleaves the host translation initiation factor EIF4G1, in order to shut down the capped cellular mRNA translation. Inhibits the host nucleus-cytoplasm protein and RNA trafficking by cleaving host members of the nuclear pores. Counteracts stress granule formation probably by antagonizing its assembly or promoting its dissassembly. Cleaves and inhibits host IFIH1/MDA5, thereby inhibiting the type-I IFN production and the establishment of the antiviral state. Cleaves and inhibits host MAVS, thereby inhibiting the type-I IFN production and the establishment of the antiviral state. In terms of biological role, plays an essential role in the virus replication cycle by acting as a viroporin. Creates a pore in the host endoplasmic reticulum and as a consequence releases Ca2+ in the cytoplasm of infected cell. In turn, high levels of cytoplasmic calcium may trigger membrane trafficking and transport of viral ER-associated proteins to viroplasms, sites of viral genome replication. Its function is as follows. Induces and associates with structural rearrangements of intracellular membranes. Displays RNA-binding, nucleotide binding and NTPase activities. May play a role in virion morphogenesis and viral RNA encapsidation by interacting with the capsid protein VP3. Localizes the viral replication complex to the surface of membranous vesicles. Together with protein 3CD binds the Cis-Active RNA Element (CRE) which is involved in RNA synthesis initiation. Acts as a cofactor to stimulate the activity of 3D polymerase, maybe through a nucleid acid chaperone activity. Functionally, localizes the viral replication complex to the surface of membranous vesicles. It inhibits host cell endoplasmic reticulum-to-Golgi apparatus transport and causes the disassembly of the Golgi complex, possibly through GBF1 interaction. This would result in depletion of MHC, trail receptors and IFN receptors at the host cell surface. Plays an essential role in viral RNA replication by recruiting ACBD3 and PI4KB at the viral replication sites, thereby allowing the formation of the rearranged membranous structures where viral replication takes place. In terms of biological role, acts as a primer for viral RNA replication and remains covalently bound to viral genomic RNA. VPg is uridylylated prior to priming replication into VPg-pUpU. The oriI viral genomic sequence may act as a template for this. The VPg-pUpU is then used as primer on the genomic RNA poly(A) by the RNA-dependent RNA polymerase to replicate the viral genome. During genome replication, the VPg-RNA linkage is removed by the host TDP2, thereby accelerating replication. During the late stage of the replication cycle, host TDP2 is excluded from sites of viral RNA synthesis and encapsidation, allowing for the generation of progeny virions. Its function is as follows. Involved in the viral replication complex and viral polypeptide maturation. It exhibits protease activity with a specificity and catalytic efficiency that is different from protease 3C. Protein 3CD lacks polymerase activity. Protein 3CD binds to the 5'UTR of the viral genome. Major viral protease that mediates proteolytic processing of the polyprotein. Cleaves host EIF5B, contributing to host translation shutoff. Also cleaves host PABPC1, contributing to host translation shutoff. Binds and inhibits host IFIH1/MDA5, thereby inhibiting the type-I IFN production and the establishment of the antiviral state. Cleaves host MAP3K7/TAK1, resulting in inhibition of TRAF6-triggered NF-kappa-B induction. Cleaves host NLRP1, triggers host N-glycine-mediated degradation of the autoinhibitory NLRP1 N-terminal fragment. Functionally, replicates the viral genomic RNA on the surface of intracellular membranes. May form linear arrays of subunits that propagate along a strong head-to-tail interaction called interface-I. Covalently attaches UMP to a tyrosine of VPg, which is used to prime RNA synthesis. The positive stranded RNA genome is first replicated at virus induced membranous vesicles, creating a dsRNA genomic replication form. This dsRNA is then used as template to synthesize positive stranded RNA genomes. ss(+)RNA genomes are either translated, replicated or encapsidated. The protein is Genome polyprotein of Homo sapiens (Human).